Reading from the N-terminus, the 137-residue chain is Holo-[acyl-carrier-protein] synthase (137 aa).

2 residues coordinate Mg(2+): Asp-8 and Glu-57.

Belongs to the P-Pant transferase superfamily. AcpS family. Requires Mg(2+) as cofactor.

The protein localises to the cytoplasm. The catalysed reaction is apo-[ACP] + CoA = holo-[ACP] + adenosine 3',5'-bisphosphate + H(+). In terms of biological role, transfers the 4'-phosphopantetheine moiety from coenzyme A to a Ser of acyl-carrier-protein. In Cereibacter sphaeroides (strain ATCC 17025 / ATH 2.4.3) (Rhodobacter sphaeroides), this protein is Holo-[acyl-carrier-protein] synthase.